Here is a 405-residue protein sequence, read N- to C-terminus: MPLLLYTCLLWLPTSGLWTVQAMDPNAAYVNMSNHHRGLASANVDFAFSLYKHLVALSPKKNIFISPVSISMALAMLSLGTCGHTRAQLLQGLGFNLTERSETEIHQGFQHLHQLFAKSDTSLEMTMGNALFLDGSLELLESFSADIKHYYESEVLAMNFQDWATASRQINSYVKNKTQGKIVDLFSGLDSPAILVLVNYIFFKGTWTQPFDLASTREENFYVDETTVVKVPMMLQSSTISYLHDSELPCQLVQMNYVGNGTVFFILPDKGKMNTVIAALSRDTINRWSAGLTSSQVDLYIPKVTISGVYDLGDVLEEMGIADLFTNQANFSRITQDAQLKSSKVVHKAVLQLNEEGVDTAGSTGVTLNLTSKPIILRFNQPFIIMIFDHFTWSSLFLARVMNPV.

An N-terminal signal peptide occupies residues Met-1–Ala-22. N-linked (GlcNAc...) asparagine glycans are attached at residues Asn-31, Asn-96, and Asn-176. Residue Gln-254 coordinates cortisol. The N-linked (GlcNAc...) asparagine glycan is linked to Asn-260. Cortisol is bound at residue Asn-286. Asn-330 and Asn-369 each carry an N-linked (GlcNAc...) asparagine glycan. Positions 390 and 393 each coordinate cortisol.

It belongs to the serpin family. N-glycosylated; binds 5 oligosaccharide chains. Post-translationally, glycosylation in position Asn-260 is needed for steroid binding. In terms of tissue distribution, plasma; synthesized in liver. Has also been identified in a number of glycocorticoid responsive cells.

The protein localises to the secreted. Functionally, major transport protein for glucocorticoids and progestins in the blood of almost all vertebrate species. The polypeptide is Corticosteroid-binding globulin (SERPINA6) (Homo sapiens (Human)).